The chain runs to 188 residues: Adenine phosphoribosyltransferase (188 aa).

This sequence belongs to the purine/pyrimidine phosphoribosyltransferase family. As to quaternary structure, homodimer.

The protein localises to the cytoplasm. It catalyses the reaction AMP + diphosphate = 5-phospho-alpha-D-ribose 1-diphosphate + adenine. It participates in purine metabolism; AMP biosynthesis via salvage pathway; AMP from adenine: step 1/1. Functionally, catalyzes a salvage reaction resulting in the formation of AMP, that is energically less costly than de novo synthesis. The chain is Adenine phosphoribosyltransferase from Burkholderia ambifaria (strain MC40-6).